The chain runs to 637 residues: Serine/threonine-protein kinase Nek11 (637 aa).

Positions 29–287 constitute a Protein kinase domain; it reads YVLQQKLGSG…AIEILKIPYI (259 aa). ATP-binding positions include 35 to 43 and Lys-61; that span reads LGSGSFGTV. The Proton acceptor role is filled by Asp-158. The residue at position 273 (Ser-273) is a Phosphoserine; by CHEK1. The stretch at 302–385 forms a coiled coil; that stretch reads TLEDKNLDCQ…QELRSRNFQQ (84 aa). The interval 399-446 is disordered; that stretch reads GMEEKEEQPEGRPSCSPQDEDEERWQDREEEFDEPTLENLSEPQPIPS. The segment covering 416-434 has biased composition (acidic residues); the sequence is QDEDEERWQDREEEFDEPT.

Belongs to the protein kinase superfamily. NEK Ser/Thr protein kinase family. NIMA subfamily. Interacts with NEK2. It depends on Mn(2+) as a cofactor. The cofactor is Mg(2+). Phosphorylated by NEK2. Phosphorylation at Ser-273 is important for its activation.

The protein localises to the nucleus. Its subcellular location is the nucleolus. It catalyses the reaction L-seryl-[protein] + ATP = O-phospho-L-seryl-[protein] + ADP + H(+). The enzyme catalyses L-threonyl-[protein] + ATP = O-phospho-L-threonyl-[protein] + ADP + H(+). Its activity is regulated as follows. Autorepressed by intramolecular binding of the C-terminus which dissociates following phosphorylation by NEK2. Activated in response to DNA damage. Inhibited by zinc. Functionally, protein kinase which plays an important role in the G2/M checkpoint response to DNA damage. Controls degradation of CDC25A by directly phosphorylating it on residues whose phosphorylation is required for BTRC-mediated polyubiquitination and degradation. This Macaca fascicularis (Crab-eating macaque) protein is Serine/threonine-protein kinase Nek11 (NEK11).